Consider the following 1081-residue polypeptide: FHIP family protein GA25918 (1081 aa).

The segment covering 1-11 has biased composition (polar residues); that stretch reads MSWLRSSPLRQ. Disordered regions lie at residues 1 to 31, 504 to 524, 650 to 685, 830 to 913, and 933 to 1027; these read MSWL…GSLR, ARPK…EQPI, ADEE…MGGG, NENS…AASS, and NNNN…SEPA. Ser-508 is modified (phosphoserine). Residues 657–668 are compositionally biased toward low complexity; the sequence is TDLTVTTTTASE. A Phosphoserine modification is found at Ser-833. Positions 840–856 are enriched in low complexity; the sequence is QPQTTLSQQQQQQQGQQ. Positions 857–876 are enriched in polar residues; it reads RSAYATLSAATPVQATQTSA. Low complexity-rich tracts occupy residues 891–913 and 933–953; these read SKSI…AASS and NNNN…GTGT. Polar residues predominate over residues 954–963; the sequence is CETSLSTNPQ. Residues 964 to 993 are compositionally biased toward low complexity; sequence SGAAAARSTGTATTANGNSSNSNISIGGST. Residues 994-1010 show a composition bias toward polar residues; sequence QTLSGHSNTTTYSSSTL.

Belongs to the FHIP family.

This Drosophila pseudoobscura pseudoobscura (Fruit fly) protein is FHIP family protein GA25918.